A 396-amino-acid polypeptide reads, in one-letter code: S-adenosylmethionine synthase 2 (396 aa).

Glu-13 contacts Mg(2+). His-19 provides a ligand contact to ATP. Glu-47 is a K(+) binding site. L-methionine-binding residues include Glu-60 and Gln-103. ATP is bound by residues 171–173, 239–242, Asp-250, 256–257, Ala-273, Lys-277, and Lys-281; these read DGK, SGRF, and RK. L-methionine is bound at residue Asp-250. Lys-281 lines the L-methionine pocket.

Belongs to the AdoMet synthase family. In terms of assembly, homotetramer. It depends on Mn(2+) as a cofactor. Mg(2+) serves as cofactor. Requires Co(2+) as cofactor. K(+) is required as a cofactor.

The protein localises to the cytoplasm. It catalyses the reaction L-methionine + ATP + H2O = S-adenosyl-L-methionine + phosphate + diphosphate. It participates in amino-acid biosynthesis; S-adenosyl-L-methionine biosynthesis; S-adenosyl-L-methionine from L-methionine: step 1/1. Its function is as follows. Catalyzes the formation of S-adenosylmethionine from methionine and ATP. The reaction comprises two steps that are both catalyzed by the same enzyme: formation of S-adenosylmethionine (AdoMet) and triphosphate, and subsequent hydrolysis of the triphosphate. The protein is S-adenosylmethionine synthase 2 (SAM2) of Dianthus caryophyllus (Carnation).